Here is a 130-residue protein sequence, read N- to C-terminus: Small ribosomal subunit protein uS8 (130 aa).

The protein belongs to the universal ribosomal protein uS8 family. Part of the 30S ribosomal subunit. Contacts proteins S5 and S12.

Functionally, one of the primary rRNA binding proteins, it binds directly to 16S rRNA central domain where it helps coordinate assembly of the platform of the 30S subunit. This is Small ribosomal subunit protein uS8 from Teredinibacter turnerae (strain ATCC 39867 / T7901).